Here is a 296-residue protein sequence, read N- to C-terminus: MKIRVATRGSKLSLLQTQELLDQVKAVEPKVEFELVVVKTTGDVVQDRPLYQIGVKGIFEKEVNLAVLRGEADVAVHSLKDLPSELTPGLVIAGFSRRAPPYDVVASREGYSLYTLPKGAVVGTSSVRRAEFLRAVRPDVEVRPLRGNVDTRVGKILSGQYDAAIMAMAGLVRLYGWEAPVKLSPIRPEEIPPPPGQGIVVAVVKEGEAWLIDILRRASDRRAAVEATAEREFLMHVGAGCHVAVGGLARYEDGGMSFVAGYASGGRRYVIKLWGEDPREVGRRAAEEIRKIREGD.

The residue at position 241 (C241) is an S-(dipyrrolylmethanemethyl)cysteine.

This sequence belongs to the HMBS family. It depends on dipyrromethane as a cofactor.

It catalyses the reaction 4 porphobilinogen + H2O = hydroxymethylbilane + 4 NH4(+). The protein operates within porphyrin-containing compound metabolism; protoporphyrin-IX biosynthesis; coproporphyrinogen-III from 5-aminolevulinate: step 2/4. Tetrapolymerization of the monopyrrole PBG into the hydroxymethylbilane pre-uroporphyrinogen in several discrete steps. The protein is Probable porphobilinogen deaminase of Pyrobaculum calidifontis (strain DSM 21063 / JCM 11548 / VA1).